The sequence spans 47 residues: Heat shock protein HSP 90 (47 aa).

This sequence belongs to the heat shock protein 90 family. In terms of assembly, homodimer.

It is found in the cytoplasm. In terms of biological role, putative molecular chaperone that may promote the maturation, structural maintenance and proper regulation of specific target proteins. The polypeptide is Heat shock protein HSP 90 (Oryctolagus cuniculus (Rabbit)).